Here is a 119-residue protein sequence, read N- to C-terminus: Chorion class CA protein ERA.3 (119 aa).

The N-terminal stretch at 1 to 21 is a signal peptide; the sequence is MSYFVVFAICIQACLFHNVYS. Residues 22-55 are left arm; sequence QCLGRVGPGGPPLGPYGGPLGGPGYGPVGYGGCG. A central domain region spans residues 56–103; sequence GYGGSGIGNVAVAGELPVVGSSAVMGQVPVIGAVEFAGPACAVGSVSI. The right arm stretch occupies residues 104–119; it reads SGACGPTCGCGGLPYY.

Belongs to the chorion protein family.

Its function is as follows. This protein is one of many from the eggshell of the silk moth. The sequence is that of Chorion class CA protein ERA.3 (ERA.3) from Bombyx mori (Silk moth).